The primary structure comprises 497 residues: MEKKYILALDQGTTSSRAMIIDEEGEVIGVAQEEFDQIFPKPGWVEHNANEIWASILAVIAGVLLKTNISSKEIAGIGITNQRETTVIWDKESGNPIYNAIVWQSRQTEDICKQLRKDGYEDTIRSKTGLLIDPYFAGTKARWILDHVDGAQERAEKGELLFGTIDTWLVWKLTGGRAHITDYSNASRTLLYNIYDLEWDDELLKMLNIPRAMLPEVRPSSEVYADTVPYHFFGEEVPVAGIAGDQQAALFGQGCFEKGMAKNTYGTGCFLLMNTGEKAVRSENGLLTTLAWGIDGKVEYALEGSIFVAGSAIQWLRDGLRMVRQSSDSENYASRIESSDGVYVVPAFVGLGAPYWDSDVRGAVFGLTRGTEKEQFIRATLESLAYQTRDVLYAMEQDSGISLKTLRVDGGASANNFLMQFQSDILGVPVERPENKETTVLGAAFLAGLAVGVWKDKNEIKKHWKLDKRFEVEMKDEQREDLYEGWHKAVKAAQAFK.

Residue Thr13 coordinates ADP. 3 residues coordinate ATP: Thr13, Thr14, and Ser15. Thr13 lines the sn-glycerol 3-phosphate pocket. Position 17 (Arg17) interacts with ADP. Positions 83, 84, and 135 each coordinate sn-glycerol 3-phosphate. Glycerol is bound by residues Arg83, Glu84, and Tyr135. Phosphohistidine; by HPr is present on His231. Residue Asp245 coordinates sn-glycerol 3-phosphate. Glycerol is bound by residues Asp245 and Gln246. Residues Thr267 and Gly310 each coordinate ADP. Residues Thr267, Gly310, Gln314, and Gly411 each coordinate ATP. 2 residues coordinate ADP: Gly411 and Asn415.

Belongs to the FGGY kinase family. As to quaternary structure, homotetramer and homodimer (in equilibrium). In terms of processing, the phosphoenolpyruvate-dependent sugar phosphotransferase system (PTS), including enzyme I, and histidine-containing protein (HPr) are required for the phosphorylation, which leads to the activation of the enzyme.

The enzyme catalyses glycerol + ATP = sn-glycerol 3-phosphate + ADP + H(+). It participates in polyol metabolism; glycerol degradation via glycerol kinase pathway; sn-glycerol 3-phosphate from glycerol: step 1/1. Its activity is regulated as follows. Activated by phosphorylation and inhibited by fructose 1,6-bisphosphate (FBP). In terms of biological role, key enzyme in the regulation of glycerol uptake and metabolism. Catalyzes the phosphorylation of glycerol to yield sn-glycerol 3-phosphate. This is Glycerol kinase from Listeria monocytogenes serotype 4a (strain HCC23).